The following is a 308-amino-acid chain: Phenylcoumaran benzylic ether reductase Betv6 (308 aa).

Residues 11–17 (GGTGYIG), Arg-36, and Lys-45 each bind NADP(+). Lys-133 serves as the catalytic Proton acceptor. Arg-137 is an NADP(+) binding site.

Belongs to the NmrA-type oxidoreductase family. Isoflavone reductase subfamily.

The catalysed reaction is (-)-dehydrodiconiferyl alcohol + NADPH + H(+) = (S)-isodihydrodehydrodiconiferyl alcohol + NADP(+). It catalyses the reaction (+)-dehydrodiconiferyl alcohol + NADPH + H(+) = (R)-isodihydrodehydrodiconiferyl alcohol + NADP(+). Its function is as follows. Oxidoreductase involved in lignan biosynthesis. Catalyzes the NADPH-dependent reduction of phenylcoumaran benzylic ethers. Converts dehydrodiconiferyl alcohol (DDC) to isodihydrodehydrodiconiferyl alcohol (IDDDC). This is Phenylcoumaran benzylic ether reductase Betv6 from Betula pendula (European white birch).